The following is a 270-amino-acid chain: MVQQGFSIDLILARSKEEAADGKDSMSSRPHIPCAPQPLPPTKYAKEMPRRKDGQDVQEHTTSFQCSLGEQGNKLQYFSPSPAALHRTWGSSDEFSSAGSEDDTNECSPRPVRNFQDTDHNGKSTKSDRRLRTAFSPQQISKLEQAFNKQRYLGASERKKLATSLMLSEIQVKTWFQNRRMKLKRQIQDQQHSLVPPPVCYPQTFPYYPGGFPVPLNSGSFYQPPALPFQAPQHSYIPDQRFIPQPLPHHVRMSGALQEQYPPLFRAQYI.

Composition is skewed to basic and acidic residues over residues 17–26 (EEAADGKDSM) and 44–59 (YAKE…DVQE). 2 disordered regions span residues 17 to 66 (EEAA…SFQC) and 88 to 134 (TWGS…LRTA). Residues 89–99 (WGSSDEFSSAG) are compositionally biased toward polar residues. Positions 116 to 131 (QDTDHNGKSTKSDRRL) are enriched in basic and acidic residues. The homeobox DNA-binding region spans 128–187 (DRRLRTAFSPQQISKLEQAFNKQRYLGASERKKLATSLMLSEIQVKTWFQNRRMKLKRQI).

As to expression, expressed in the ventral marginal zone of gastrulae. At the end of gastrulation, predominantly localized to the ventral region of the closing slit blastopore. At early tail bud stage, expression is maintained only in the forming proctodeum.

Its subcellular location is the nucleus. Functionally, probable transcription regulator. Acts in a ventral signaling pathway downstream of bmp4 and vent2B. The polypeptide is Homeobox protein vent1B (vent1B) (Xenopus laevis (African clawed frog)).